We begin with the raw amino-acid sequence, 920 residues long: MPLRLEIKRKFAQRSERVKSVDLHPTEPWILASLYSGTLCIWNYQTQTMVKSFDVTELPVRSAKFIARKQWVVAGADDMFIRVYNYNTMDKIKVFEAHADYIRCVAVHPTLPYVLSSSDDMLIKLWDWEKGWLCTQIFEGHSHYVMQVTFNPKDTNTFASASLDRTIKIWNLGSPDPNFTLDAHLKGVNCVDYFTGGDKPYLITGSDDHTAKVWDYQTKSCVQTLEGHTHNVSAVSFHPELPIIITGSEDGTVRIWHATTYRLENTLNYGLERVWAIGHIKGSRRVVIGYDEGSIMVKLGREIPVASMDNSGKIIWAKHNEIHTVNIKSVGADEVTDGERLPLAVKELGTCDLYPQSLKHNPNGRFVVVCGDGEYIIYTALAWRNRSFGSALEFVWSSDGEHAVRESSTKIKIFSKNFQEKKTVRPTFSAEHIFGGTLLTMCSSDFICFYDWAECRLIRRIDVTVKNLYWADSGDLVAIASDTSFYILKFNRDIVSSYFDGGKQIDEEGIEDAFELLNETNERVRTGLWVGDCFIYTNSSWRLNYCVGGEVTTMYHLDRPMYLLGYLANQSRVYLIDKEFNVIGYTLLLSLIEYKTLVMRGDLEQANEVLPSIPKEHHNSVAHFLESRGMTEDALEVATDPDYRFELAIQLGRLAVAKDIAVEAQNESKWKQLGELAMSSGKLDMAEECMRHAMDLSGLLLLYSSLGDADGMMKLAALAKEQGKNNVAFLCLFMLGQVEDCLHLLVESNRIPEAALMARSYLPSKVSEIVALWRNDLTKISPKAAESLADPEEYPNLFEEWQVALSLENRAAETRGVHPPAGDYCSHADRDHTTLVDAFRIMQIEEEGRLEQGDVLDEVGEEGEDGEEEEEEDRQEESSDGRQQNVEEEAVVVDADSTDGAVLVNGNESEEQWVLTPPQE.

8 WD repeats span residues Gln13–Ser52, Val55–Val94, Ala97–Gln136, Gly140–Thr180, Ala183–Thr224, Gly227–Thr266, Thr350–Leu392, and Arg460–Asp500. The tract at residues Leu850 to Glu920 is disordered. Residues Asp854 to Gln875 are compositionally biased toward acidic residues.

It belongs to the WD repeat COPB2 family. As to quaternary structure, oligomeric complex that consists of at least the alpha, beta, beta', gamma, delta, epsilon and zeta subunits.

The protein resides in the cytoplasm. Its subcellular location is the golgi apparatus membrane. The protein localises to the cytoplasmic vesicle. It localises to the COPI-coated vesicle membrane. Functionally, the coatomer is a cytosolic protein complex that binds to dilysine motifs and reversibly associates with Golgi non-clathrin-coated vesicles, which further mediate biosynthetic protein transport from the ER, via the Golgi up to the trans Golgi network. Coatomer complex is required for budding from Golgi membranes, and is essential for the retrograde Golgi-to-ER transport of dilysine-tagged proteins. The polypeptide is Coatomer subunit beta'-1 (Arabidopsis thaliana (Mouse-ear cress)).